A 473-amino-acid polypeptide reads, in one-letter code: H(+)/Cl(-) exchange transporter ClcA (473 aa).

The Cytoplasmic segment spans residues 1 to 32 (MKTDTPSLETPQAARLRRRQLIRQLLERDKTP). The chain crosses the membrane as a helical span at residues 33–69 (LAILFMAAVVGTLVGLAAVAFDKGVAWLQNQRMGALV). At 70-76 (HTADNYP) the chain is on the periplasmic side. A helical transmembrane segment spans residues 77 to 100 (LLLTVAFLCSAVLAMFGYFLVRKY). The Selectivity filter part_1 motif lies at 106–110 (GSGIP). A chloride-binding site is contributed by Ser107. The segment at residues 109–116 (IPEIEGAL) is an intramembrane region (helical). At 117 to 123 (EDQRPVR) the chain is on the cytoplasmic side. 2 helical membrane passes run 124–141 (WWRV…TLGG) and 148–166 (EGPT…LDIF). The Selectivity filter part_2 motif lies at 146 to 150 (GREGP). The Cytoplasmic portion of the chain corresponds to 167-176 (RLKGDEARHT). Intramembrane regions (helical) lie at residues 177 to 189 (LLAT…LAAA) and 193 to 201 (PLAGILFII). Topologically, residues 202–214 (EEMRPQFRYTLIS) are cytoplasmic. A helical transmembrane segment spans residues 215-232 (IKAVFIGVIMSTIMYRIF). Topologically, residues 233–252 (NHEVALIDVGKLSDAPLNTL) are periplasmic. Residues 253-281 (WLYLILGIIFGIFGPIFNKWVLGMQDLLH) traverse the membrane as a helical segment. At 282-287 (RVHGGN) the chain is on the cytoplasmic side. The helical transmembrane segment at 288-309 (ITKWVLMGGAIGGLCGLLGFVA) threads the bilayer. Residues 310-329 (PATSGGGFNLIPIATAGNFS) are Periplasmic-facing. 2 helical membrane-spanning segments follow: residues 330 to 349 (MGML…LCFS) and 355 to 376 (GIFA…MVAV). The Selectivity filter part_3 signature appears at 355–359 (GIFAP). 2 residues coordinate chloride: Ile356 and Phe357. The Periplasmic segment spans residues 377–386 (ELFPQYHLEA). The segment at residues 387-401 (GTFAIAGMGALLAAS) is an intramembrane region (helical). An intramembrane region (note=Loop between two helices) is located at residues 402–404 (IRA). The segment at residues 405 to 416 (PLTGIILVLEMT) is an intramembrane region (helical). Positions 417–421 (DNYQL) form an intramembrane region, note=Loop between two helices. The chain crosses the membrane as a helical span at residues 422 to 438 (ILPMIITGLGATLLAQF). The Cytoplasmic portion of the chain corresponds to 439–473 (TGGKPLYSAILARTLAKQEAEQLARSKAASASENT). Residue Tyr445 coordinates chloride.

The protein belongs to the chloride channel (TC 2.A.49) family. ClcA subfamily. As to quaternary structure, homodimer.

It localises to the cell inner membrane. It carries out the reaction 2 chloride(in) + H(+)(out) = 2 chloride(out) + H(+)(in). Its function is as follows. Proton-coupled chloride transporter. Functions as antiport system and exchanges two chloride ions for 1 proton. Probably acts as an electrical shunt for an outwardly-directed proton pump that is linked to amino acid decarboxylation, as part of the extreme acid resistance (XAR) response. This is H(+)/Cl(-) exchange transporter ClcA from Shigella flexneri serotype 5b (strain 8401).